A 358-amino-acid polypeptide reads, in one-letter code: Feruloyl esterase B (358 aa).

The first 18 residues, 1-18 (MAIPLVLLLAWLLPTVFA), serve as a signal peptide directing secretion. The segment at 19 to 291 (ASLTQVSNFG…VSVVLDWFGI (273 aa)) is catalytic. Ser136 serves as the catalytic Charge relay system. N-linked (GlcNAc...) asparagine glycosylation is found at Asn179 and Asn246. The segment at 292–321 (TGGGGGNGGGSGSTTTTTSATTTSTGPTGG) is gly/Thr-rich linker. Residues 297–318 (GNGGGSGSTTTTTSATTTSTGP) are disordered. Low complexity predominate over residues 304–318 (STTTTTSATTTSTGP). The region spanning 322–358 (CTAAHWDQCGGNGYTGCTSCASPYTCQKVNDYYSQCL) is the CBM1 domain.

This sequence belongs to the carbohydrate esterase 1 (CE1) family. Feruloyl esterase type B subfamily.

The protein resides in the secreted. It catalyses the reaction feruloyl-polysaccharide + H2O = ferulate + polysaccharide.. Functionally, involved in degradation of plant cell walls. Hydrolyzes the feruloyl-arabinose ester bond in arabinoxylans as well as the feruloyl-galactose and feruloyl-arabinose ester bonds in pectin. Active against methyl esters of caffeate (MCA), but not sinapate (MSA). The chain is Feruloyl esterase B (faeB) from Talaromyces stipitatus (strain ATCC 10500 / CBS 375.48 / QM 6759 / NRRL 1006) (Penicillium stipitatum).